The primary structure comprises 240 residues: Protein MGARP (240 aa).

Over 1–40 (MYLRRAVSKTLALPLRAPPNPAPLGKDASLRRMSSNRFPG) the chain is Cytoplasmic. A helical; Anchor for type IV membrane protein transmembrane segment spans residues 41-63 (SSGSNMIYYLVVGVTVSAGGYYA). Residues 64–240 (YKTVTSDQAK…VGSEAASAQG (177 aa)) lie on the Mitochondrial intermembrane side of the membrane. The segment at 166–240 (RETTEVNPET…VGSEAASAQG (75 aa)) is disordered. The span at 170–181 (EVNPETTPEVTN) shows a compositional bias: low complexity. Basic and acidic residues predominate over residues 191 to 201 (DNDKDTTKNET). The span at 202–213 (SDEYAELEEENS) shows a compositional bias: acidic residues. Positions 228–240 (EASVGSEAASAQG) are enriched in low complexity.

In terms of assembly, interacts with RHOT1/Miro-1, TRAK1/OIP106 and TRAK2/GRIF1. Interacts with RHOT2/Miro-2. In terms of tissue distribution, expressed in the brain, adrenal gland and corneal endothelium (CE). Expressed in steroid-producing cells of the ovary and testis (at protein level). Expressed in steroid-producing cells of the ovary and testis. Weakly expressed in placenta. Expressed in corneal endothelial cells.

It is found in the mitochondrion. The protein localises to the mitochondrion outer membrane. The protein resides in the mitochondrion inner membrane. Its function is as follows. Plays a role in the trafficking of mitochondria along microtubules. Regulates the kinesin-mediated axonal transport of mitochondria to nerve terminals along microtubules during hypoxia. Participates in the translocation of TRAK2/GRIF1 from the cytoplasm to the mitochondrion. Also plays a role in steroidogenesis through maintenance of mitochondrial abundance and morphology. Plays an inhibitory role during neocortex development by regulating mitochondrial morphology, distribution and motility in neocortical neurons. The sequence is that of Protein MGARP (MGARP) from Homo sapiens (Human).